We begin with the raw amino-acid sequence, 542 residues long: Anaerobic glycerol-3-phosphate dehydrogenase subunit A (542 aa).

FAD is bound at residue 10–38 (DVIIIGGGATGAGIARDCALRGLRVILVE).

It belongs to the FAD-dependent glycerol-3-phosphate dehydrogenase family. As to quaternary structure, composed of a catalytic GlpA/B dimer and of membrane bound GlpC. FAD serves as cofactor. The cofactor is FMN.

It is found in the cell inner membrane. The catalysed reaction is a quinone + sn-glycerol 3-phosphate = dihydroxyacetone phosphate + a quinol. Its pathway is polyol metabolism; glycerol degradation via glycerol kinase pathway; glycerone phosphate from sn-glycerol 3-phosphate (anaerobic route): step 1/1. In terms of biological role, conversion of glycerol 3-phosphate to dihydroxyacetone. Uses fumarate or nitrate as electron acceptor. The polypeptide is Anaerobic glycerol-3-phosphate dehydrogenase subunit A (glpA) (Escherichia coli O157:H7).